The primary structure comprises 610 residues: UvrABC system protein C (610 aa).

The GIY-YIG domain occupies 16–94; sequence SQPGVYRMYD…IKLYQPRYNV (79 aa). Positions 204 to 239 constitute a UVR domain; the sequence is QQVLTRLIERMEQASQQLKFEDAARYRDQIQAVRQV.

This sequence belongs to the UvrC family. As to quaternary structure, interacts with UvrB in an incision complex.

It is found in the cytoplasm. Its function is as follows. The UvrABC repair system catalyzes the recognition and processing of DNA lesions. UvrC both incises the 5' and 3' sides of the lesion. The N-terminal half is responsible for the 3' incision and the C-terminal half is responsible for the 5' incision. The chain is UvrABC system protein C from Photorhabdus laumondii subsp. laumondii (strain DSM 15139 / CIP 105565 / TT01) (Photorhabdus luminescens subsp. laumondii).